The primary structure comprises 244 residues: uncharacterized protein (244 aa).

A run of 6 helical transmembrane segments spans residues 22-42 (IMLQ…LLSF), 63-83 (FIFS…WGLT), 110-130 (VILL…EAFA), 140-160 (IMSL…NLTV), 186-206 (GVLF…IFQL), and 213-233 (AVFD…MLVV).

It localises to the cell membrane. This is an uncharacterized protein from Haemophilus influenzae (strain ATCC 51907 / DSM 11121 / KW20 / Rd).